A 68-amino-acid chain; its full sequence is Protein transport protein Sec61 gamma-1 subunit (68 aa).

Residues Met-1–Glu-32 are Cytoplasmic-facing. Residues Phe-33–Ile-61 form a helical membrane-spanning segment. Topologically, residues Asn-62 to Ser-68 are extracellular.

This sequence belongs to the SecE/SEC61-gamma family. In terms of assembly, heterotrimeric complex composed of SEC61-alpha, SEC61-beta and SEC61-gamma.

It localises to the endoplasmic reticulum membrane. Necessary for protein translocation in the endoplasmic reticulum. This chain is Protein transport protein Sec61 gamma-1 subunit (SEC61G1), found in Drosophila melanogaster (Fruit fly).